The primary structure comprises 334 residues: Histo-blood group ABO system transferase 2 (334 aa).

The Cytoplasmic segment spans residues 1-15 (MKDLRFGRLKCYSLH). The chain crosses the membrane as a helical; Signal-anchor for type II membrane protein span at residues 16 to 36 (LGILPLTVLVLVFFCFVCLSL). Residues 37 to 334 (RSQEWGHPGA…VPKNHQAIRN (298 aa)) lie on the Lumenal side of the membrane. N-linked (GlcNAc...) asparagine glycosylation is present at asparagine 94. UDP-N-acetyl-alpha-D-galactosamine-binding positions include 102–104 (FAV), tyrosine 107, and 192–194 (DVD). Aspartate 192 and aspartate 194 together coordinate Mn(2+). The an alpha-L-fucosyl-(1-&gt;2)-beta-D-galactosyl derivative site is built by histidine 214, threonine 226, glutamate 284, and aspartate 307. The active-site Nucleophile is glutamate 284.

Belongs to the glycosyltransferase 6 family. Mn(2+) is required as a cofactor. Large intestine, caecum, stomach, pancreas, submaxillary gland and kidney (at protein level). Ubiquitous.

It is found in the golgi apparatus. The protein resides in the golgi stack membrane. Its subcellular location is the secreted. The enzyme catalyses an alpha-L-fucosyl-(1-&gt;2)-beta-D-galactosyl derivative + UDP-N-acetyl-alpha-D-galactosamine = an N-acetyl-alpha-D-galactosaminyl-(1-&gt;3)-[alpha-L-fucosyl-(1-&gt;2)]-beta-D-galactosyl derivative + UDP + H(+). It carries out the reaction an alpha-L-fucosyl-(1-&gt;2)-beta-D-galactosyl derivative + UDP-alpha-D-galactose = an alpha-D-galactosyl-(1-&gt;3)-[alpha-L-fucosyl-(1-&gt;2)]-beta-D-galactosyl derivative + UDP + H(+). Its pathway is protein modification; protein glycosylation. In terms of biological role, possesses strong B transferase activity and weak A transferase activity. The chain is Histo-blood group ABO system transferase 2 (Abo2) from Rattus norvegicus (Rat).